The chain runs to 204 residues: ATP synthase subunit 4, mitochondrial (204 aa).

The next 2 membrane-spanning stretches (helical) occupy residues 27–47 and 52–72; these read GILA…LYVV and ILLV…APLY.

As to quaternary structure, F-type ATP synthases have 2 components, the catalytic core F(1) and the membrane-embedded component F(0), linked together by a central stalk and a peripheral stalk. The central stalk, also called rotor shaft, is often seen as part of F(1). The peripheral stalk is seen as part of F(0). F(0) contains the membrane channel next to the rotor. F-type ATP synthases form dimers but each monomer functions independently in ATP generation. The dimer consists of 18 different polypeptides: ATP1 (subunit alpha, part of F(1), 3 molecules per monomer), ATP2 (subunit beta, part of F(1), 3 molecules per monomer), ATP3 (subunit gamma, part of the central stalk), ATP4 (subunit b, part of the peripheral stalk), ATP5/OSCP (subunit 5/OSCP, part of the peripheral stalk), ATP6 (subunit a, part of the peripheral stalk), ATP7 (subunit d, part of the peripheral stalk), ATP8 (subunit 8, part of the peripheral stalk), OLI1 (subunit c, part of the rotor, 10 molecules per monomer), ATP14 (subunit h, part of the peripheral stalk), ATP15 (subunit epsilon, part of the central stalk), ATP16 (subunit delta, part of the central stalk), ATP17 (subunit f, part of the peripheral stalk), ATP18 (subunit i/j, part of the peripheral stalk). Dimer-specific subunits are ATP19 (subunit k, at interface between monomers), ATP20 (subunit g, at interface between monomers), TIM11 (subunit e, at interface between monomers). Also contains subunit L.

The protein localises to the mitochondrion inner membrane. Its function is as follows. Mitochondrial membrane ATP synthase (F(1)F(0) ATP synthase or Complex V) produces ATP from ADP in the presence of a proton gradient across the membrane which is generated by electron transport complexes of the respiratory chain. F-type ATP synthases consist of two structural domains, F(1) - containing the extramembraneous catalytic core, and F(0) - containing the membrane proton channel, linked together by a central stalk and a peripheral stalk. During catalysis, ATP synthesis in the catalytic domain of F(1) is coupled via a rotary mechanism of the central stalk subunits to proton translocation. Part of the complex F(0) domain and the peripheral stalk, which acts as a stator to hold the catalytic alpha/ATP1(3)beta/ATP2(3) subcomplex and subunit a/ATP6 static relative to the rotary elements. The sequence is that of ATP synthase subunit 4, mitochondrial from Pichia angusta (Yeast).